An 81-amino-acid chain; its full sequence is Three-finger toxin 3FTx-Oxy6 (81 aa).

The signal sequence occupies residues 1–21 (MKTLLLSLVVMTIVYLDLGYT). Cystine bridges form between Cys24–Cys43, Cys36–Cys61, Cys65–Cys73, and Cys74–Cys79.

Belongs to the three-finger toxin family. Short-chain subfamily. Expressed by the venom gland.

Its subcellular location is the secreted. The chain is Three-finger toxin 3FTx-Oxy6 from Oxyuranus microlepidotus (Inland taipan).